The sequence spans 460 residues: Serine--tRNA ligase (460 aa).

255–257 serves as a coordination point for L-serine; the sequence is TAE. ATP is bound by residues 286 to 288 and V302; that span reads RKE. Residue E309 coordinates L-serine. Residue 373–376 participates in ATP binding; sequence EMVS. T409 contributes to the L-serine binding site.

This sequence belongs to the class-II aminoacyl-tRNA synthetase family. Type-1 seryl-tRNA synthetase subfamily. In terms of assembly, homodimer. The tRNA molecule binds across the dimer.

Its subcellular location is the cytoplasm. It carries out the reaction tRNA(Ser) + L-serine + ATP = L-seryl-tRNA(Ser) + AMP + diphosphate + H(+). The catalysed reaction is tRNA(Sec) + L-serine + ATP = L-seryl-tRNA(Sec) + AMP + diphosphate + H(+). It functions in the pathway aminoacyl-tRNA biosynthesis; selenocysteinyl-tRNA(Sec) biosynthesis; L-seryl-tRNA(Sec) from L-serine and tRNA(Sec): step 1/1. Functionally, catalyzes the attachment of serine to tRNA(Ser). Is also able to aminoacylate tRNA(Sec) with serine, to form the misacylated tRNA L-seryl-tRNA(Sec), which will be further converted into selenocysteinyl-tRNA(Sec). The polypeptide is Serine--tRNA ligase (Hyperthermus butylicus (strain DSM 5456 / JCM 9403 / PLM1-5)).